The primary structure comprises 139 residues: ATP synthase epsilon chain (139 aa).

Belongs to the ATPase epsilon chain family. F-type ATPases have 2 components, CF(1) - the catalytic core - and CF(0) - the membrane proton channel. CF(1) has five subunits: alpha(3), beta(3), gamma(1), delta(1), epsilon(1). CF(0) has three main subunits: a, b and c.

The protein localises to the cell membrane. Its function is as follows. Produces ATP from ADP in the presence of a proton gradient across the membrane. This chain is ATP synthase epsilon chain, found in Pediococcus pentosaceus (strain ATCC 25745 / CCUG 21536 / LMG 10740 / 183-1w).